The following is a 192-amino-acid chain: uncharacterized protein (192 aa).

Residues Gln29–Ser160 form the Nudix hydrolase domain. Positions Gly67–Ala89 match the Nudix box motif. Residues Glu83 and Glu87 each coordinate Mg(2+).

It belongs to the Nudix hydrolase family. PCD1 subfamily. The cofactor is Mn(2+). Mg(2+) serves as cofactor.

Probably mediates the hydrolysis of some nucleoside diphosphate derivatives. This is an uncharacterized protein from Salmonella choleraesuis (strain SC-B67).